The chain runs to 606 residues: Prostaglandin G/H synthase 1 (606 aa).

Positions 1-30 (MSRSSPSLRLPVLLLLLLLLLLPPPPPVLP) are cleaved as a signal peptide. The region spanning 38 to 76 (PVNPCCYFPCQHQGVCVRVALDRYQCDCTRTGYSGPNCT) is the EGF-like domain. 4 cysteine pairs are disulfide-bonded: C42–C53, C43–C165, C47–C63, and C65–C75. N-linked (GlcNAc...) asparagine glycosylation is found at N74, N110, and N150. H213 (proton acceptor) is an active-site residue. The active-site For cyclooxygenase activity is the Y391. H394 is a heme b binding site. N-linked (GlcNAc...) asparagine glycosylation occurs at N416. A disulfide bridge links C575 with C581.

It belongs to the prostaglandin G/H synthase family. Homodimer. Heme b serves as cofactor.

The protein localises to the microsome membrane. Its subcellular location is the endoplasmic reticulum membrane. The catalysed reaction is (5Z,8Z,11Z,14Z)-eicosatetraenoate + AH2 + 2 O2 = prostaglandin H2 + A + H2O. It catalyses the reaction (5Z,8Z,11Z,14Z)-eicosatetraenoate + 2 O2 = prostaglandin G2. The enzyme catalyses prostaglandin G2 + AH2 = prostaglandin H2 + A + H2O. It carries out the reaction (9Z,12Z)-octadecadienoate + AH2 + O2 = (9R)-hydroxy-(10E,12Z)-octadecadienoate + A + H2O. The catalysed reaction is (9Z,12Z)-octadecadienoate + AH2 + O2 = (9S)-hydroxy-(10E,12Z)-octadecadienoate + A + H2O. It catalyses the reaction (9Z,12Z)-octadecadienoate + AH2 + O2 = (13S)-hydroxy-(9Z,11E)-octadecadienoate + A + H2O. The enzyme catalyses (9Z,12Z)-octadecadienoate + AH2 + O2 = (13R)-hydroxy-(9Z,11E)-octadecadienoate + A + H2O. Its pathway is lipid metabolism; prostaglandin biosynthesis. Its activity is regulated as follows. The cyclooxygenase activity is inhibited by nonsteroidal anti-inflammatory drugs (NSAIDs) including ibuprofen, flurbiprofen, ketoprofen, naproxen, flurbiprofen, anirolac, fenclofenac and diclofenac. Dual cyclooxygenase and peroxidase that plays an important role in the biosynthesis pathway of prostanoids, a class of C20 oxylipins mainly derived from arachidonate ((5Z,8Z,11Z,14Z)-eicosatetraenoate, AA, C20:4(n-6)), with a particular role in the inflammatory response. The cyclooxygenase activity oxygenates AA to the hydroperoxy endoperoxide prostaglandin G2 (PGG2), and the peroxidase activity reduces PGG2 to the hydroxy endoperoxide prostaglandin H2 (PGH2), the precursor of all 2-series prostaglandins and thromboxanes. This complex transformation is initiated by abstraction of hydrogen at carbon 13 (with S-stereochemistry), followed by insertion of molecular O2 to form the endoperoxide bridge between carbon 9 and 11 that defines prostaglandins. The insertion of a second molecule of O2 (bis-oxygenase activity) yields a hydroperoxy group in PGG2 that is then reduced to PGH2 by two electrons. Involved in the constitutive production of prostanoids in particular in the stomach and platelets. In gastric epithelial cells, it is a key step in the generation of prostaglandins, such as prostaglandin E2 (PGE2), which plays an important role in cytoprotection. In platelets, it is involved in the generation of thromboxane A2 (TXA2), which promotes platelet activation and aggregation, vasoconstriction and proliferation of vascular smooth muscle cells. Can also use linoleate (LA, (9Z,12Z)-octadecadienoate, C18:2(n-6)) as substrate and produce hydroxyoctadecadienoates (HODEs) in a regio- and stereospecific manner, being (9R)-HODE ((9R)-hydroxy-(10E,12Z)-octadecadienoate) and (13S)-HODE ((13S)-hydroxy-(9Z,11E)-octadecadienoate) its major products. The protein is Prostaglandin G/H synthase 1 (PTGS1) of Oryctolagus cuniculus (Rabbit).